The primary structure comprises 212 residues: ATP synthase F(0) complex subunit a (212 aa).

The next 6 helical transmembrane spans lie at 3–23, 58–78, 87–107, 128–148, 154–174, and 179–199; these read MMGIPLILIAIILPMLLMFTS, WAAMLITLMIFLLSMNMLGLL, QLSMNMALAAPLWLATVLTGL, IPLLIIIETVSLFIRPLALGV, LTAGHLLIQLISTAAFVLMPT, and ALSTLIVLMLLTGLEIAVAMI.

Belongs to the ATPase A chain family. As to quaternary structure, component of the ATP synthase complex composed at least of ATP5F1A/subunit alpha, ATP5F1B/subunit beta, ATP5MC1/subunit c (homooctomer), MT-ATP6/subunit a, MT-ATP8/subunit 8, ATP5ME/subunit e, ATP5MF/subunit f, ATP5MG/subunit g, ATP5MK/subunit k, ATP5MJ/subunit j, ATP5F1C/subunit gamma, ATP5F1D/subunit delta, ATP5F1E/subunit epsilon, ATP5PF/subunit F6, ATP5PB/subunit b, ATP5PD/subunit d, ATP5PO/subunit OSCP. ATP synthase complex consists of a soluble F(1) head domain (subunits alpha(3) and beta(3)) - the catalytic core - and a membrane F(0) domain - the membrane proton channel (subunits c, a, 8, e, f, g, k and j). These two domains are linked by a central stalk (subunits gamma, delta, and epsilon) rotating inside the F1 region and a stationary peripheral stalk (subunits F6, b, d, and OSCP). Interacts with DNAJC30; interaction is direct.

The protein resides in the mitochondrion inner membrane. It carries out the reaction H(+)(in) = H(+)(out). Its function is as follows. Subunit a, of the mitochondrial membrane ATP synthase complex (F(1)F(0) ATP synthase or Complex V) that produces ATP from ADP in the presence of a proton gradient across the membrane which is generated by electron transport complexes of the respiratory chain. ATP synthase complex consist of a soluble F(1) head domain - the catalytic core - and a membrane F(1) domain - the membrane proton channel. These two domains are linked by a central stalk rotating inside the F(1) region and a stationary peripheral stalk. During catalysis, ATP synthesis in the catalytic domain of F(1) is coupled via a rotary mechanism of the central stalk subunits to proton translocation. With the subunit c (ATP5MC1), forms the proton-conducting channel in the F(0) domain, that contains two crucial half-channels (inlet and outlet) that facilitate proton movement from the mitochondrial intermembrane space (IMS) into the matrix. Protons are taken up via the inlet half-channel and released through the outlet half-channel, following a Grotthuss mechanism. The protein is ATP synthase F(0) complex subunit a of Tropidurus montanus (Lizard).